Consider the following 341-residue polypeptide: L-threonine 3-dehydrogenase (341 aa).

Residue cysteine 38 participates in Zn(2+) binding. Active-site charge relay system residues include threonine 40 and histidine 43. Residues histidine 63, glutamate 64, cysteine 93, cysteine 96, cysteine 99, and cysteine 107 each coordinate Zn(2+). Residues isoleucine 175, aspartate 195, arginine 200, 262-264 (LGI), and 286-287 (IY) contribute to the NAD(+) site.

The protein belongs to the zinc-containing alcohol dehydrogenase family. As to quaternary structure, homotetramer. Requires Zn(2+) as cofactor.

It localises to the cytoplasm. It catalyses the reaction L-threonine + NAD(+) = (2S)-2-amino-3-oxobutanoate + NADH + H(+). It participates in amino-acid degradation; L-threonine degradation via oxydo-reductase pathway; glycine from L-threonine: step 1/2. Its function is as follows. Catalyzes the NAD(+)-dependent oxidation of L-threonine to 2-amino-3-ketobutyrate. This is L-threonine 3-dehydrogenase from Cronobacter sakazakii (strain ATCC BAA-894) (Enterobacter sakazakii).